The chain runs to 208 residues: Glutathione S-transferase (208 aa).

Positions 1–78 (MSYKLTYFPI…HLARKFNLNG (78 aa)) constitute a GST N-terminal domain. Glutathione contacts are provided by residues Tyr-7, Lys-42, 49 to 50 (QL), and 62 to 63 (QS). One can recognise a GST C-terminal domain in the interval 80-200 (NNAETSYVDM…YCAKRNASKM (121 aa)).

Belongs to the GST superfamily. Pi family. In terms of assembly, homodimer.

The enzyme catalyses RX + glutathione = an S-substituted glutathione + a halide anion + H(+). In terms of biological role, conjugation of reduced glutathione to a wide number of exogenous and endogenous hydrophobic electrophiles. This Dirofilaria immitis (Canine heartworm) protein is Glutathione S-transferase.